A 237-amino-acid chain; its full sequence is N-alpha-acetyltransferase 40 (237 aa).

G2 carries N-myristoyl glycine lipidation. The 154-residue stretch at 63–216 (SGLEPATVDW…EDCSYEILSR (154 aa)) folds into the N-acetyltransferase domain. Substrate-binding positions include Y85, 127-129 (DVE), and Y138. Residues 140 to 142 (VQL) and 148 to 153 (RKGLGK) each bind acetyl-CoA. T174 contacts substrate. N179 lines the acetyl-CoA pocket. Residues S197 and Y211 each contribute to the substrate site.

It belongs to the acetyltransferase family. NAA40 subfamily. Widely expressed; with the highest expression level in liver and the lowest expression in brain (at protein level).

Its subcellular location is the cytoplasm. It is found in the nucleus. The enzyme catalyses N-terminal L-seryl-[histone H4] + acetyl-CoA = N-terminal N(alpha)-acetyl-L-seryl-[histone H4] + CoA + H(+). It catalyses the reaction N-terminal L-seryl-[histone H2A] + acetyl-CoA = N-terminal N(alpha)-acetyl-L-seryl-[histone H2A] + CoA + H(+). In terms of biological role, N-alpha-acetyltransferase that specifically mediates the acetylation of the N-terminal residues of histones H4 and H2A. In contrast to other N-alpha-acetyltransferase, has a very specific selectivity for histones H4 and H2A N-terminus and specifically recognizes the 'Ser-Gly-Arg-Gly sequence'. Acts as a negative regulator of apoptosis. May play a role in hepatic lipid metabolism. The polypeptide is N-alpha-acetyltransferase 40 (Homo sapiens (Human)).